A 213-amino-acid polypeptide reads, in one-letter code: Virulence factor 1 (213 aa).

It localises to the host mitochondrion. Its function is as follows. Plays a role in antagonizing the host innate immune response. The polypeptide is Virulence factor 1 (Norovirus (isolate Mouse/NoV/United States/MNV1/2002/GV) (MNV-1)).